A 233-amino-acid polypeptide reads, in one-letter code: Small ribosomal subunit protein uS7m (233 aa).

Residues methionine 1 to tyrosine 28 constitute a mitochondrion transit peptide.

Belongs to the universal ribosomal protein uS7 family. Component of the mitochondrial ribosome small subunit (28S) which comprises a 12S rRNA and about 30 distinct proteins.

It is found in the mitochondrion. This chain is Small ribosomal subunit protein uS7m (mrps7), found in Xenopus laevis (African clawed frog).